Reading from the N-terminus, the 722-residue chain is Serine/threonine-protein kinase dkf-1 (722 aa).

2 consecutive Phorbol-ester/DAG-type zinc fingers follow at residues 98 to 148 (PHVV…RNNC) and 186 to 236 (PHTL…ASNC). One can recognise a PH domain in the interval 279-407 (KKLEGWMMHF…QFIKESLQPP (129 aa)). The region spanning 426–685 (VLSDKTLGSG…IEQCLDHGWL (260 aa)) is the Protein kinase domain. Residues 432–440 (LGSGQFGTV) and Lys455 each bind ATP. Residue Asp551 is the Proton acceptor of the active site. Phosphothreonine is present on Thr588.

It belongs to the protein kinase superfamily. CAMK Ser/Thr protein kinase family. PKD subfamily. Requires Mg(2+) as cofactor. Prolonged phosphorylation at Thr-588 results in ubiquitination and degradation. Highly expressed in embryos and at lower levels through the four larval stages in adults. Present in a region bounded by the anterior and posterior bulbs of the pharynx and an area of the tail containing the lumbar, dorsorectal and pre-anal ganglia. Expressed in neurons.

Its subcellular location is the cytoplasm. The protein localises to the membrane. It carries out the reaction L-seryl-[protein] + ATP = O-phospho-L-seryl-[protein] + ADP + H(+). It catalyses the reaction L-threonyl-[protein] + ATP = O-phospho-L-threonyl-[protein] + ADP + H(+). Activated by DAG and phorbol esters. Phorbol-ester/DAG-type domain 1 binds phorbol ester with high affinity and mediates accumulation at the cell periphery. Phorbol-ester/DAG-type domain 2 binds phorbol ester with low affinity but may mediate initial contact, resulting in a conformational change allowing previously occluded domain 1 to anchor the kinase. Phosphorylation on Thr-588 is then also required for activation and may also result in a further conformational change. Functionally, converts transient diacylglycerol (DAG) signals into prolonged physiological effects, independently of PKC. Role in the regulation of growth and neuromuscular control of movement. Involved in immune response to S.aureus bacterium by activating transcription factor hlh-30 downstream of phospholipase plc-1. The sequence is that of Serine/threonine-protein kinase dkf-1 (dkf-1) from Caenorhabditis elegans.